The chain runs to 1863 residues: E3 ubiquitin-protein ligase ubr3 (1863 aa).

Residues 80-151 form a UBR-type zinc finger; the sequence is TLCGLVWTAN…ESGFCNRHRL (72 aa). Disordered regions lie at residues 302–330, 970–995, and 1128–1152; these read LDDS…SSTK, PEVE…SATF, and IPPK…RARE. 2 stretches are compositionally biased toward basic and acidic residues: residues 971-984 and 1134-1152; these read EVER…ERET and SPGD…RARE. Residues 1270–1328 form an RING-type; degenerate zinc finger; sequence DSSCLQSVSIGWDGGVYVQTCGHTLHIDCHKSYMESLRNDQVLQGISVDKGEFTCPLCR.

Belongs to the E3 ubiquitin-protein ligase UBR1-like family.

It catalyses the reaction S-ubiquitinyl-[E2 ubiquitin-conjugating enzyme]-L-cysteine + [acceptor protein]-L-lysine = [E2 ubiquitin-conjugating enzyme]-L-cysteine + N(6)-ubiquitinyl-[acceptor protein]-L-lysine.. It participates in protein modification; protein ubiquitination. E3 ubiquitin-protein ligase which is a component of the N-end rule pathway. Recognizes and binds to proteins bearing specific N-terminal residues, leading to their ubiquitination and subsequent degradation. Positively regulates hedgehog/shh-signaling pathways that function in eye development, neuronal specification and somite development. Activation of shh up-regulates transcription of ubr3, which in turn promotes hedgehog/shh signaling possibly by controlling negative regulators such as Kif7. This chain is E3 ubiquitin-protein ligase ubr3, found in Danio rerio (Zebrafish).